The primary structure comprises 414 residues: NADH-ubiquinone oxidoreductase chain 4 (414 aa).

10 consecutive transmembrane segments (helical) span residues 18-38 (LVQL…MIGV), 47-67 (IAAF…LMSI), 96-116 (IIFI…PLHL), 126-146 (PTAG…YGYI), 160-180 (YFPI…IATL), 188-208 (IVAY…FSGV), 216-236 (IILM…IGVI), 254-274 (MMPI…AFPI), 293-313 (IIIA…SFWL), and 375-395 (VNIF…IVGM).

This sequence belongs to the complex I subunit 4 family.

It localises to the mitochondrion membrane. It carries out the reaction a ubiquinone + NADH + 5 H(+)(in) = a ubiquinol + NAD(+) + 4 H(+)(out). Functionally, core subunit of the mitochondrial membrane respiratory chain NADH dehydrogenase (Complex I) that is believed to belong to the minimal assembly required for catalysis. Complex I functions in the transfer of electrons from NADH to the respiratory chain. The immediate electron acceptor for the enzyme is believed to be ubiquinone. This chain is NADH-ubiquinone oxidoreductase chain 4 (nad4), found in Dictyostelium citrinum (Slime mold).